We begin with the raw amino-acid sequence, 722 residues long: Polyribonucleotide nucleotidyltransferase (722 aa).

Mg(2+) contacts are provided by D495 and D501. The KH domain maps to 562 to 621; it reads PRLLSFRIDPELIGTVIGPGGRTIKGITERTNTKIDIEDGGIVTIASHDGVAAEEAQKII. The S1 motif domain maps to 631 to 699; sequence GEVFTGSITR…NRGRINLTLR (69 aa).

Belongs to the polyribonucleotide nucleotidyltransferase family. Mg(2+) serves as cofactor.

The protein resides in the cytoplasm. It catalyses the reaction RNA(n+1) + phosphate = RNA(n) + a ribonucleoside 5'-diphosphate. In terms of biological role, involved in mRNA degradation. Catalyzes the phosphorolysis of single-stranded polyribonucleotides processively in the 3'- to 5'-direction. This is Polyribonucleotide nucleotidyltransferase from Prochlorococcus marinus (strain SARG / CCMP1375 / SS120).